Here is a 153-residue protein sequence, read N- to C-terminus: Ribosome maturation factor RimP (153 aa).

Belongs to the RimP family.

It is found in the cytoplasm. Functionally, required for maturation of 30S ribosomal subunits. This is Ribosome maturation factor RimP from Synechococcus elongatus (strain ATCC 33912 / PCC 7942 / FACHB-805) (Anacystis nidulans R2).